Reading from the N-terminus, the 469-residue chain is Glutamine synthetase (469 aa).

The GS beta-grasp domain maps to 13-97 (KEVRYVDLRF…LRCDIVEPAT (85 aa)). One can recognise a GS catalytic domain in the interval 105-469 (PRSIAKRAEA…PVEFDMYYSL (365 aa)). Glutamate 130 and glutamate 132 together coordinate Mg(2+). An ATP-binding site is contributed by glutamate 208. Mg(2+) is bound by residues glutamate 213 and glutamate 221. L-glutamate-binding positions include 265 to 266 (NG) and glycine 266. Mg(2+) is bound at residue histidine 270. Residues 272–274 (HQS) and serine 274 each bind ATP. L-glutamate contacts are provided by arginine 322, glutamate 328, and arginine 340. Arginine 340, arginine 345, and lysine 353 together coordinate ATP. Glutamate 358 is a binding site for Mg(2+). Arginine 360 serves as a coordination point for L-glutamate. An O-AMP-tyrosine modification is found at tyrosine 398.

It belongs to the glutamine synthetase family. As to quaternary structure, oligomer of 12 subunits arranged in the form of two hexameric ring. Mg(2+) is required as a cofactor.

Its subcellular location is the cytoplasm. The catalysed reaction is L-glutamate + NH4(+) + ATP = L-glutamine + ADP + phosphate + H(+). The activity of this enzyme could be controlled by adenylation under conditions of abundant glutamine. Functionally, catalyzes the ATP-dependent biosynthesis of glutamine from glutamate and ammonia. This Methylococcus capsulatus (strain ATCC 33009 / NCIMB 11132 / Bath) protein is Glutamine synthetase.